The following is a 355-amino-acid chain: 3-dehydroquinate synthase (355 aa).

NAD(+) is bound by residues 71–76 (EGEERK), 105–109 (GVVGD), 129–130 (TS), K142, and K151. 3 residues coordinate Zn(2+): E184, H246, and H263.

It belongs to the sugar phosphate cyclases superfamily. Dehydroquinate synthase family. It depends on Co(2+) as a cofactor. The cofactor is Zn(2+). NAD(+) serves as cofactor.

The protein resides in the cytoplasm. It carries out the reaction 7-phospho-2-dehydro-3-deoxy-D-arabino-heptonate = 3-dehydroquinate + phosphate. It participates in metabolic intermediate biosynthesis; chorismate biosynthesis; chorismate from D-erythrose 4-phosphate and phosphoenolpyruvate: step 2/7. In terms of biological role, catalyzes the conversion of 3-deoxy-D-arabino-heptulosonate 7-phosphate (DAHP) to dehydroquinate (DHQ). This is 3-dehydroquinate synthase from Streptococcus pneumoniae (strain Hungary19A-6).